Consider the following 451-residue polypeptide: MRTKLSTCNVWFPLLVLLVWNPARLVLANIQEDEAKNNITIFTRILDRLLDGYDNRLRPGLGDSITEVFTNIYVTSFGPVSDTDMEYTIDVFFRQKWKDERLKFKGPMNILRLNNSMASKIWTPDTFFHNGKKSVAHNMTMPNKLLRIQDDGTLLYTMRLTVQAECPMHLEDFPMDAHSCPLKFGSYAYTTSEVTYIWTYNPSDSVQVAPDGSRLNQYDLLGQSIGKETIKSSTGEYTVMTAHFHLKRKIGYFVIQTYLPCIMTVILSQVSFWLNRESVPARTVFGVTTVLTMTTLSISARNSLPKVAYATAMDWFIAVCYAFVFSALIEFATVNYFTKRGWAWDGKSVVNDKKKEKGSVMIQNNAYAVAVANYAPNLSKDPVLSTISKSATTPEPNKKPENKPAEAKKTFNSVSKIDRMSRIVFPVLFGTFNLVYWATYLNREPVLGVSP.

Positions 1-28 (MRTKLSTCNVWFPLLVLLVWNPARLVLA) are cleaved as a signal peptide. The Extracellular segment spans residues 29–249 (NIQEDEAKNN…MTAHFHLKRK (221 aa)). A glycan (N-linked (GlcNAc...) asparagine) is linked at asparagine 38. Arginine 94 lines the 4-aminobutanoate pocket. 2 N-linked (GlcNAc...) asparagine glycosylation sites follow: asparagine 114 and asparagine 138. Threonine 157 lines the 4-aminobutanoate pocket. A disulfide bridge links cysteine 166 with cysteine 180. Helical transmembrane passes span 250 to 270 (IGYF…LSQV), 281 to 300 (ARTV…SISA), and 312 to 332 (AMDW…IEFA). Topologically, residues 333–420 (TVNYFTKRGW…FNSVSKIDRM (88 aa)) are cytoplasmic. Residues 389-408 (KSATTPEPNKKPENKPAEAK) are disordered. Residues 396-408 (PNKKPENKPAEAK) show a composition bias toward basic and acidic residues. A helical membrane pass occupies residues 421-441 (SRIVFPVLFGTFNLVYWATYL). Residues 442–451 (NREPVLGVSP) lie on the Extracellular side of the membrane.

The protein belongs to the ligand-gated ion channel (TC 1.A.9) family. Gamma-aminobutyric acid receptor (TC 1.A.9.5) subfamily. GABRA2 sub-subfamily. As to quaternary structure, heteropentamer, formed by a combination of alpha (GABRA1-6), beta (GABRB1-3), gamma (GABRG1-3), delta (GABRD), epsilon (GABRE), rho (GABRR1-3), pi (GABRP) and theta (GABRQ) subunits, each subunit exhibiting distinct physiological and pharmacological properties. Binds UBQLN1. Interacts with KIF21B. Interacts with LHFPL4. Interacts with SHISA7; interaction leads to the regulation of GABA(A) receptor trafficking, channel deactivation kinetics and pharmacology. In terms of processing, glycosylated. As to expression, expressed in brain (at protein level).

Its subcellular location is the postsynaptic cell membrane. It localises to the cell membrane. The protein localises to the cytoplasmic vesicle membrane. The protein resides in the cell projection. It is found in the dendrite. It catalyses the reaction chloride(in) = chloride(out). With respect to regulation, activated by pentobarbital. Inhibited by the antagonist bicuculline. Alpha subunit of the heteropentameric ligand-gated chloride channel gated by gamma-aminobutyric acid (GABA), a major inhibitory neurotransmitter in the brain. GABA-gated chloride channels, also named GABA(A) receptors (GABAAR), consist of five subunits arranged around a central pore and contain GABA active binding site(s) located at the alpha and beta subunit interface(s). When activated by GABA, GABAARs selectively allow the flow of chloride anions across the cell membrane down their electrochemical gradient. Chloride influx into the postsynaptic neuron following GABAAR opening decreases the neuron ability to generate a new action potential, thereby reducing nerve transmission. The alpha-2 subunit exhibits synaptogenic activity together with beta-2 and very little to no activity together with beta-3, the gamma-2 subunit being necessary but not sufficient to induce rapid synaptic contacts formation. This is Gamma-aminobutyric acid receptor subunit alpha-2 from Rattus norvegicus (Rat).